The primary structure comprises 136 residues: MSLTLRVLAPDQSVFDGSADEVILPSTTGQLGILPGHVSLLAALDVGVLRVRADGGWKSIALMGGFAEVDADDVTVLVNSAELGSSIDASSAESDLQAARNEVSKMEGQPASADKVKAQQSLDRARARVQAAKNQD.

Residues 88–136 (DASSAESDLQAARNEVSKMEGQPASADKVKAQQSLDRARARVQAAKNQD) form a disordered region.

It belongs to the ATPase epsilon chain family. F-type ATPases have 2 components, CF(1) - the catalytic core - and CF(0) - the membrane proton channel. CF(1) has five subunits: alpha(3), beta(3), gamma(1), delta(1), epsilon(1). CF(0) has three main subunits: a, b and c.

The protein resides in the cellular thylakoid membrane. Functionally, produces ATP from ADP in the presence of a proton gradient across the membrane. This is ATP synthase epsilon chain from Synechococcus sp. (strain WH7803).